The chain runs to 80 residues: Small ribosomal subunit protein uS17 (80 aa).

Belongs to the universal ribosomal protein uS17 family. As to quaternary structure, part of the 30S ribosomal subunit.

Its function is as follows. One of the primary rRNA binding proteins, it binds specifically to the 5'-end of 16S ribosomal RNA. The polypeptide is Small ribosomal subunit protein uS17 (Cereibacter sphaeroides (strain ATCC 17029 / ATH 2.4.9) (Rhodobacter sphaeroides)).